Consider the following 375-residue polypeptide: Chlorophyll a/b light-harvesting protein PcbC (375 aa).

The next 6 membrane-spanning stretches (helical) occupy residues 40-60, 102-122, 151-171, 225-245, 262-282, and 300-320; these read LLGAHIAHAGLIAFWAGSITV, YFVIGILHLVTSAVLGAGGLF, LSLILGHHLLLLGILCLAFVA, IIGGHVYIGILELIGGTWHIL, AILSYSLGAVGWMGLLSGFFV, and GAAAVQYILGVLLLVGHVWHA. Residues 352–375 form a disordered region; sequence ARTFIGRGKPQPEPPKKKGLFGRG.

This sequence belongs to the PsbB/PsbC family. IsiA/Pcb subfamily. As to quaternary structure, the antenna complex consists of chlorophylls (a and b) and chlorophyll a/b binding proteins. It depends on chlorophyll a as a cofactor. Chlorophyll b serves as cofactor.

Its subcellular location is the cellular thylakoid membrane. The antenna complex functions as a light receptor, it captures and delivers excitation energy to photosystems II and I. The Prochlorales pcb genes are not related to higher plant LHCs. The polypeptide is Chlorophyll a/b light-harvesting protein PcbC (pcbC) (Prochlorothrix hollandica).